Reading from the N-terminus, the 328-residue chain is GTP cyclohydrolase MptA (328 aa).

Belongs to the GTP cyclohydrolase IV family. Homodimer. It depends on Fe(2+) as a cofactor.

It catalyses the reaction GTP + H2O = 7,8-dihydroneopterin 2',3'-cyclic phosphate + formate + diphosphate + H(+). The protein operates within cofactor biosynthesis; 5,6,7,8-tetrahydromethanopterin biosynthesis. Functionally, converts GTP to 7,8-dihydro-D-neopterin 2',3'-cyclic phosphate, the first intermediate in the biosynthesis of coenzyme methanopterin. This is GTP cyclohydrolase MptA from Methanospirillum hungatei JF-1 (strain ATCC 27890 / DSM 864 / NBRC 100397 / JF-1).